The chain runs to 158 residues: Non-specific lipid transfer protein GPI-anchored 29 (158 aa).

Positions 1-24 are cleaved as a signal peptide; it reads MAYFSTATSLLLLVLSVSSPYVHG. Disulfide bonds link C28/C71, C38/C55, C56/C95, and C69/C105. Residue N84 is glycosylated (N-linked (GlcNAc...) asparagine). The GPI-anchor amidated serine moiety is linked to residue S134. The propeptide at 135–158 is removed in mature form; it reads KGNSLIPISGFSFVIVTALAMFRI.

Belongs to the plant LTP family. In terms of tissue distribution, confined to the ovaries of the inflorescence.

The protein resides in the secreted. It is found in the cell membrane. Functionally, probable lipid transfer protein. This chain is Non-specific lipid transfer protein GPI-anchored 29, found in Arabidopsis thaliana (Mouse-ear cress).